Consider the following 178-residue polypeptide: Ribosome maturation factor RimP (178 aa).

The protein belongs to the RimP family.

The protein localises to the cytoplasm. Its function is as follows. Required for maturation of 30S ribosomal subunits. This Maricaulis maris (strain MCS10) (Caulobacter maris) protein is Ribosome maturation factor RimP.